A 294-amino-acid chain; its full sequence is uncharacterized protein (294 aa).

A disordered region spans residues 259–294 (LNAPTPIPPPITSHAGQEEALKPQRASKGKKAKARK). Residues 283–294 (RASKGKKAKARK) show a composition bias toward basic residues.

This is an uncharacterized protein from Homo sapiens (Human).